The sequence spans 90 residues: Putative regulatory protein Cbei_1140 (90 aa).

This sequence belongs to the RemA family.

The sequence is that of Putative regulatory protein Cbei_1140 from Clostridium beijerinckii (strain ATCC 51743 / NCIMB 8052) (Clostridium acetobutylicum).